The following is a 3460-amino-acid chain: Reelin (3460 aa).

A signal peptide spans 1-25 (MERSGWARQTFLLALLLGATLRARA). In terms of domain architecture, Reelin spans 26-190 (AAGYYPRFSP…GAPTDVTVHP (165 aa)). Cysteine 40 and cysteine 126 are joined by a disulfide. N-linked (GlcNAc...) asparagine glycosylation is present at asparagine 140. An intrachain disulfide couples cysteine 154 to cysteine 178. 3 N-linked (GlcNAc...) asparagine glycosylation sites follow: asparagine 257, asparagine 289, and asparagine 305. Cysteine 539 and cysteine 580 form a disulfide bridge. The stretch at 592 to 603 (EFSTNHGRSWSL) is one BNR 1 repeat. A disulfide bridge links cysteine 608 with cysteine 613. N-linked (GlcNAc...) asparagine glycosylation occurs at asparagine 628. Residues 670–701 (IGPSCLKFCSGRGQCTRHGCKCDPGFSGPACE) enclose the EGF-like 1 domain. 2 disulfides stabilise this stretch: cysteine 674–cysteine 684 and cysteine 691–cysteine 700. Residues 798–809 (HYSYDNGITWKL) form a BNR 2 repeat. Cysteine 894 and cysteine 936 are oxidised to a cystine. The BNR 3 repeat unit spans residues 951–962 (EYSTNHGLTWHL). Intrachain disulfides connect cysteine 967/cysteine 974, cysteine 1033/cysteine 1043, and cysteine 1050/cysteine 1059. An EGF-like 2 domain is found at 1029-1060 (IGQQCPNMCSGHGSCDHGICRCDQGYQGTECH). The stretch at 1156 to 1167 (QYSNNGGIQWHL) is one BNR 4 repeat. Asparagine 1266 carries an N-linked (GlcNAc...) asparagine glycan. Cysteines 1270 and 1309 form a disulfide. The BNR 5 repeat unit spans residues 1322-1333 (QYSHDAGMSWFL). Cysteine 1338 and cysteine 1347 form a disulfide bridge. Positions 1408–1441 (ISEPCPSYCSGHGDCISGVCFCDLGYTAAQGTCV) constitute an EGF-like 3 domain. The stretch at 1534–1545 (QYSNDNGILWHL) is one BNR 6 repeat. N-linked (GlcNAc...) asparagine glycosylation occurs at asparagine 1599. Cysteines 1632 and 1672 form a disulfide. The stretch at 1685-1696 (QYSLNNGKDWHL) is one BNR 7 repeat. Cysteines 1701 and 1708 form a disulfide. A glycan (N-linked (GlcNAc...) asparagine) is linked at asparagine 1749. Residues 1764–1795 (LASGCPWMCSGRGICDAGRCVCDRGFGGPYCV) enclose the EGF-like 4 domain. Residues 1883–1894 (QFSISGGITWHL) form a BNR 8 repeat. N-linked (GlcNAc...) asparagine glycosylation is present at asparagine 1920. The BNR 9 repeat unit spans residues 2042 to 2053 (EFSRDFGATWHL). Zn(2+)-binding residues include histidine 2060 and histidine 2073. The region spanning 2128–2160 (IGPQCEEMCNGQGSCINGTKCICDPGYSGPTCK) is the EGF-like 5 domain. Intrachain disulfides connect cysteine 2132–cysteine 2142, cysteine 2136–cysteine 2148, and cysteine 2150–cysteine 2159. An N-linked (GlcNAc...) asparagine glycan is attached at asparagine 2144. Glutamate 2178 contacts Zn(2+). Cysteine 2194 and cysteine 2234 are disulfide-bonded. The stretch at 2249–2260 (QYSLNGGLSWSL) is one BNR 10 repeat. Glutamate 2263 lines the Zn(2+) pocket. N-linked (GlcNAc...) asparagine glycans are attached at residues asparagine 2268 and asparagine 2316. 3 cysteine pairs are disulfide-bonded: cysteine 2347/cysteine 2386, cysteine 2392/cysteine 2558, and cysteine 2543/cysteine 2583. Zn(2+) is bound by residues glutamate 2396, glutamate 2398, and histidine 2459. The stretch at 2398 to 2409 (EYSVDLGLSWHP) is one BNR 11 repeat. An EGF-like 6 domain is found at 2477 to 2508 (IGDGCIDMCSGHGRCIQGNCVCDEQWGGLYCD). N-linked (GlcNAc...) asparagine glycosylation occurs at asparagine 2568. BNR repeat units follow at residues 2597–2608 (EYSVNGGITWNL) and 2777–2788 (QYSTDFGVSWNY). Cystine bridges form between cysteine 2793–cysteine 2800, cysteine 2856–cysteine 2866, cysteine 2860–cysteine 2871, cysteine 2873–cysteine 2882, and cysteine 2918–cysteine 2965. The region spanning 2852–2883 (LGPGCLDNCRGHGDCLREQCICDPGYSGPNCY) is the EGF-like 7 domain. A glycan (N-linked (GlcNAc...) asparagine) is linked at asparagine 2961. The stretch at 2978-2989 (DYSTDGGITWTL) is one BNR 14 repeat. N-linked (GlcNAc...) asparagine glycosylation is found at asparagine 3015 and asparagine 3072. A BNR 15 repeat occupies 3142–3154 (EYTKDARSDSWQL). An intrachain disulfide couples cysteine 3159 to cysteine 3169. A glycan (N-linked (GlcNAc...) asparagine) is linked at asparagine 3184. The 33-residue stretch at 3227 to 3259 (IGEACPKLCSGHGYCTTGAICICDESFQGDDCS) folds into the EGF-like 8 domain. Disulfide bonds link cysteine 3231-cysteine 3241, cysteine 3235-cysteine 3247, cysteine 3249-cysteine 3258, and cysteine 3295-cysteine 3345. A BNR 16 repeat occupies 3362–3373 (QYSVNNGITWHV). Residues asparagine 3411 and asparagine 3438 are each glycosylated (N-linked (GlcNAc...) asparagine).

The protein belongs to the reelin family. In terms of assembly, oligomer of disulfide-linked homodimers. N-glycosylated and to a lesser extent also O-glycosylated. Abundantly produced during brain ontogenesis by the Cajal-Retzius cells and other pioneer neurons located in the telencephalic marginal zone and by granule cells of the external granular layer of the cerebellum. In adult brain, preferentially expressed in GABAergic interneurons of prefrontal cortices, temporal cortex, hippocampus and glutamatergic granule cells of cerebellum. Expression is reduced to about 50% in patients with schizophrenia. Also expressed in fetal and adult liver.

Its subcellular location is the secreted. It is found in the extracellular space. The protein localises to the extracellular matrix. Functionally, extracellular matrix serine protease secreted by pioneer neurons that plays a role in layering of neurons in the cerebral cortex and cerebellum by coordinating cell positioning during neurodevelopment. Regulates microtubule function in neurons and neuronal migration. Binding to the extracellular domains of lipoprotein receptors VLDLR and LRP8/APOER2 induces tyrosine phosphorylation of DAB1 and modulation of TAU phosphorylation. Affects migration of sympathetic preganglionic neurons in the spinal cord, where it seems to act as a barrier to neuronal migration. Enzymatic activity is important for the modulation of cell adhesion. This is Reelin (RELN) from Homo sapiens (Human).